A 629-amino-acid chain; its full sequence is tRNA uridine 5-carboxymethylaminomethyl modification enzyme MnmG (629 aa).

FAD is bound by residues G13–G18, V125, and S180. G273–F287 provides a ligand contact to NAD(+). Q370 serves as a coordination point for FAD.

This sequence belongs to the MnmG family. Homodimer. Heterotetramer of two MnmE and two MnmG subunits. FAD serves as cofactor.

It is found in the cytoplasm. NAD-binding protein involved in the addition of a carboxymethylaminomethyl (cmnm) group at the wobble position (U34) of certain tRNAs, forming tRNA-cmnm(5)s(2)U34. This is tRNA uridine 5-carboxymethylaminomethyl modification enzyme MnmG from Escherichia coli O45:K1 (strain S88 / ExPEC).